Reading from the N-terminus, the 93-residue chain is Pyrimidine/purine nucleoside phosphorylase (93 aa).

The protein belongs to the nucleoside phosphorylase PpnP family.

It catalyses the reaction a purine D-ribonucleoside + phosphate = a purine nucleobase + alpha-D-ribose 1-phosphate. It carries out the reaction adenosine + phosphate = alpha-D-ribose 1-phosphate + adenine. The catalysed reaction is cytidine + phosphate = cytosine + alpha-D-ribose 1-phosphate. The enzyme catalyses guanosine + phosphate = alpha-D-ribose 1-phosphate + guanine. It catalyses the reaction inosine + phosphate = alpha-D-ribose 1-phosphate + hypoxanthine. It carries out the reaction thymidine + phosphate = 2-deoxy-alpha-D-ribose 1-phosphate + thymine. The catalysed reaction is uridine + phosphate = alpha-D-ribose 1-phosphate + uracil. The enzyme catalyses xanthosine + phosphate = alpha-D-ribose 1-phosphate + xanthine. In terms of biological role, catalyzes the phosphorolysis of diverse nucleosides, yielding D-ribose 1-phosphate and the respective free bases. Can use uridine, adenosine, guanosine, cytidine, thymidine, inosine and xanthosine as substrates. Also catalyzes the reverse reactions. In Pseudoalteromonas atlantica (strain T6c / ATCC BAA-1087), this protein is Pyrimidine/purine nucleoside phosphorylase.